The primary structure comprises 408 residues: 1-deoxy-D-xylulose 5-phosphate reductoisomerase (408 aa).

Residues Thr-27, Gly-28, Ser-29, Ile-30, Ala-53, Arg-54, Asn-55, and Asn-140 each coordinate NADPH. Lys-141 serves as a coordination point for 1-deoxy-D-xylulose 5-phosphate. Residue Glu-142 participates in NADPH binding. Position 166 (Asp-166) interacts with Mn(2+). Positions 167, 168, 192, and 215 each coordinate 1-deoxy-D-xylulose 5-phosphate. Position 168 (Glu-168) interacts with Mn(2+). Gly-221 contributes to the NADPH binding site. 1-deoxy-D-xylulose 5-phosphate-binding residues include Ser-228, Asn-233, Lys-234, and Glu-237. Residue Glu-237 participates in Mn(2+) binding.

It belongs to the DXR family. It depends on Mg(2+) as a cofactor. Mn(2+) is required as a cofactor.

It carries out the reaction 2-C-methyl-D-erythritol 4-phosphate + NADP(+) = 1-deoxy-D-xylulose 5-phosphate + NADPH + H(+). It functions in the pathway isoprenoid biosynthesis; isopentenyl diphosphate biosynthesis via DXP pathway; isopentenyl diphosphate from 1-deoxy-D-xylulose 5-phosphate: step 1/6. Catalyzes the NADPH-dependent rearrangement and reduction of 1-deoxy-D-xylulose-5-phosphate (DXP) to 2-C-methyl-D-erythritol 4-phosphate (MEP). This is 1-deoxy-D-xylulose 5-phosphate reductoisomerase from Nitratidesulfovibrio vulgaris (strain DP4) (Desulfovibrio vulgaris).